The sequence spans 477 residues: Bile acid transporter (477 aa).

15 helical membrane passes run 13-33, 50-70, 83-103, 107-127, 139-159, 166-186, 206-226, 228-248, 272-292, 301-321, 333-353, 359-379, 381-401, 406-426, and 444-464; these read FVPFAIAALLVSLIGGFTAVL, WISLALAMSSAACAPILGKLG, IVIFAAGNVLTAVATSLIFML, FIVGIGTAAISPIVMAYIVTE, LYMLISSGAVVVGPTCGGLIM, VMMWVCVALCVVVFLICTFSI, LVVVFFSLFLCIPSFGQNIGW, STAFIAAAAVALVALFILVMV, LILFLTQGLMMANMTNVIVFV, IISSFAISIMYIGMSLGSVII, VLTFSLVLTAIGCALMYLFKA, IFAASLGILGFGLGGNATIFM, VALSGLSSEVAGSGTGTYGLF, APFGVAVFVPMFANGVTANIA, and ISSIQTLTLVELGCIVVGIIL.

This sequence belongs to the major facilitator superfamily.

It localises to the cell membrane. Its pathway is lipid metabolism; bile acid degradation. The sequence is that of Bile acid transporter (baiG) from Clostridium scindens (strain JCM 10418 / VPI 12708).